A 105-amino-acid chain; its full sequence is Large ribosomal subunit protein uL24 (105 aa).

The interval 40 to 61 (RIKKHTPQSANERGASSGGIVT) is disordered.

Belongs to the universal ribosomal protein uL24 family. Part of the 50S ribosomal subunit.

In terms of biological role, one of two assembly initiator proteins, it binds directly to the 5'-end of the 23S rRNA, where it nucleates assembly of the 50S subunit. Its function is as follows. One of the proteins that surrounds the polypeptide exit tunnel on the outside of the subunit. This Mycobacteroides abscessus (strain ATCC 19977 / DSM 44196 / CCUG 20993 / CIP 104536 / JCM 13569 / NCTC 13031 / TMC 1543 / L948) (Mycobacterium abscessus) protein is Large ribosomal subunit protein uL24.